The primary structure comprises 690 residues: MVLTDEQRQAIAKKREEAIRRAAAYREREMQAAANATASTSSAAPPAPPKPVIPVMFSQNRQNFQPMKPTMNNSTKQSTINNYIKQVQKPEPTSLIKPTIGVKLKLDIGDRIKIEFYPFHSAVIDLIKQVPSRNYDPAKRSWTVASSDHITISNILKNATAVKVELEPLPQNIIGLTNFKPKAAPSDLNTVMDPSLIERLFPYQKEGVIFALERDGRILLADEMGLGKSVQALTIARYYKADWPLLIVCPASVKGAWKKQLNTFFPIIHRIFIVDKSSDPLPDVCTSNTVAIMSYEQMVLKHDILKKEKYRTIIFDESHMLKDGKARRTKVATDLSKVALHVILLSGTPALSRPSELFTQIRLIDHKLFTNFHEFAIRYCDGKQGRFCFEAKGCTNSEELAAIMFKRLMIRRLKADVLKDLPEKRREVVYVSGPTIDARMDDLQKARADYEKVNSMERKHESLLEFYSLTGIVKAAAVCEHILENYFYPDAPPRKVLIFAHHQIVLDTIQVEVNKRKLGSIRIDGKTPSHRRTALCDSFQTDDNIRVAVLSITAAGVGITLTAASVVVFAEIHFNPGYLVQAEDRAHRVGQKDSVFVQYLIAKKTADDVMWNMVQQKLDVLGQVSLSSDTFRTADKMHLRFNDAAQPGIAEYLKKTPDTTIDEWEDPVEEKEDDDLEIICDSPAPKRIKN.

Residues 30–49 (MQAAANATASTSSAAPPAPP) are disordered. Over residues 31–44 (QAAANATASTSSAA) the composition is skewed to low complexity. Residues 92-170 (PTSLIKPTIG…AVKVELEPLP (79 aa)) form the HARP domain. Residues 209–367 (IFALERDGRI…FTQIRLIDHK (159 aa)) form the Helicase ATP-binding domain. 222–229 (DEMGLGKS) serves as a coordination point for ATP. The short motif at 316–319 (DESH) is the DESH box element. The Nuclear localization signal signature appears at 411–428 (RRLKADVLKDLPEKRREV). Residues 482–639 (ILENYFYPDA…TFRTADKMHL (158 aa)) enclose the Helicase C-terminal domain.

This sequence belongs to the SNF2/RAD54 helicase family. SMARCAL1 subfamily.

The protein resides in the nucleus. It catalyses the reaction ATP + H2O = ADP + phosphate + H(+). Functionally, ATP-dependent annealing helicase that catalyzes the rewinding of the stably unwound DNA. In Caenorhabditis elegans, this protein is SWI/SNF-related matrix-associated actin-dependent regulator of chromatin subfamily A-like protein 1 homolog.